A 795-amino-acid chain; its full sequence is Phenylalanine--tRNA ligase beta subunit (795 aa).

Positions 39-148 (KSEFHGVVVG…KETLVGINVY (110 aa)) constitute a tRNA-binding domain. In terms of domain architecture, B5 spans 400–475 (HKNNTIRLHH…RIYEYNNVHL (76 aa)). Residues Asp453, Asp459, and Asp463 each coordinate Mg(2+). Positions 701–794 (SKFPTVRRDI…LQKKFQAVLR (94 aa)) constitute an FDX-ACB domain.

This sequence belongs to the phenylalanyl-tRNA synthetase beta subunit family. Type 1 subfamily. In terms of assembly, tetramer of two alpha and two beta subunits. Mg(2+) is required as a cofactor.

The protein localises to the cytoplasm. The enzyme catalyses tRNA(Phe) + L-phenylalanine + ATP = L-phenylalanyl-tRNA(Phe) + AMP + diphosphate + H(+). The polypeptide is Phenylalanine--tRNA ligase beta subunit (pheT) (Buchnera aphidicola subsp. Acyrthosiphon pisum (strain APS) (Acyrthosiphon pisum symbiotic bacterium)).